The chain runs to 358 residues: Fructose-bisphosphate aldolase 6, cytosolic (358 aa).

Position 2 is an N-acetylserine (S2). Substrate is bound at residue R39. Position 68 is an S-glutathionyl cysteine; transient (C68). Residue C173 is modified to S-glutathionyl cysteine; transient; alternate. Residue C173 is modified to S-nitrosocysteine; transient; alternate. Catalysis depends on E183, which acts as the Proton acceptor. Residue K225 is the Schiff-base intermediate with dihydroxyacetone-P of the active site. Residues 266–268 and R298 contribute to the substrate site; that span reads SGG. The residue at position 350 (S350) is a Phosphoserine. K354 is subject to N6,N6,N6-trimethyllysine.

The protein belongs to the class I fructose-bisphosphate aldolase family. In terms of assembly, homotetramer. Interacts with TRX1 and TRX3. Interacts with GAPC1 and VDAC3. S-glutathionylated at Cys-68 and Cys-173. Post-translationally, S-nitrosylated at Cys-173. As to expression, expressed in roots, rosettes leaves, cauline leaves, stems and flowers.

It localises to the cytoplasm. The protein localises to the cytosol. The protein resides in the nucleus. Its subcellular location is the mitochondrion. It carries out the reaction beta-D-fructose 1,6-bisphosphate = D-glyceraldehyde 3-phosphate + dihydroxyacetone phosphate. It functions in the pathway carbohydrate degradation; glycolysis; D-glyceraldehyde 3-phosphate and glycerone phosphate from D-glucose: step 4/4. Its activity is regulated as follows. Total and irreversible inhibition by S-nitrosoglutathione (GSNO). Partial and reversible inhibition by oxidized glutathione (GSSG). Fructose-bisphosphate aldolase that plays a key role in glycolysis and gluconeogenesis. Associates with GAPC1 to the outer mitochondrial membrane, in a redox-dependent manner, leading to binding and bundling of actin. Actin binding and bundling occurs under oxidizing conditions and is reversible under reducing conditions. May be part of a redox-dependent retrograde signal transduction network for adaptation upon oxidative stress. This Arabidopsis thaliana (Mouse-ear cress) protein is Fructose-bisphosphate aldolase 6, cytosolic.